Consider the following 151-residue polypeptide: Small ribosomal subunit protein bS6 (151 aa).

A disordered region spans residues 98–151; it reads EESPIQKAEKENRERKNRAERRAAEAAAATETEKSESEESAEEETSTDTTGEEE. The segment covering 135-151 has biased composition (acidic residues); the sequence is EESAEEETSTDTTGEEE.

The protein belongs to the bacterial ribosomal protein bS6 family.

Its function is as follows. Binds together with bS18 to 16S ribosomal RNA. This Teredinibacter turnerae (strain ATCC 39867 / T7901) protein is Small ribosomal subunit protein bS6.